The following is a 550-amino-acid chain: Endonuclease/exonuclease/phosphatase family domain-containing protein 1 (550 aa).

The HhH domain occupies 39 to 68; sequence ERLNINTATEEELMTLPGVNRGVAQNIVEY. Positions 194–213 are enriched in polar residues; the sequence is STNTNGGFTHPSPTSFSVQS. The disordered stretch occupies residues 194–216; the sequence is STNTNGGFTHPSPTSFSVQSDEP.

This chain is Endonuclease/exonuclease/phosphatase family domain-containing protein 1 (eepd1), found in Danio rerio (Zebrafish).